A 677-amino-acid polypeptide reads, in one-letter code: Beta-galactosidase BgaA (677 aa).

Arg-112 provides a ligand contact to substrate. Cys-116 is a binding site for Zn(2+). Asn-150 contributes to the substrate binding site. Catalysis depends on Glu-151, which acts as the Proton donor. Zn(2+) contacts are provided by Cys-156, Cys-158, and Cys-161. Glu-309 serves as the catalytic Nucleophile. Residues Trp-317 and 357 to 360 (EKYH) each bind substrate.

This sequence belongs to the glycosyl hydrolase 42 family. As to quaternary structure, dimer.

It carries out the reaction Hydrolysis of terminal non-reducing beta-D-galactose residues in beta-D-galactosides.. With respect to regulation, no activity is lost during treatment with 20 or 100 mM EDTA in Z buffer for 3 hours at 0 degrees Celsius, nor is activity greatly stimulated by the addition of cations. Inhibited by 1 mM zinc and 1 mM copper, the levels of activity decrease to 10% of the untreated control. Nickel, cobalt and manganese at concentrations of 10 mM decrease enzyme activity to either 40% (for nickel and cobalt) or 60% (for manganese) of the activity in untreated controls. No change in enzyme activity in the presence of calcium and magnesium at concentrations up to 50 mM. EDTA-treated enzyme exhibits a slight increase in relative specific activity when it is assayed in the presence of 50 mM NaCl or 50 mM KCl, it does not exhibit enhanced activity at concentrations greater than 250 mM. Maintains between 20 and 40% of activity in the presence of 4 M NaCl or 4 M KCl, and it is more active in the presence of KCl than in the presence of NaCl. Retains 50% of activity in the presence of 3 M KCl or 2.5 M NaCl. Its function is as follows. Hydrolyzes o-nitrophenyl-beta-D-galactopyranoside (ONPG), p-nitrophenyl-beta-D-galactopyranoside (PNPG), 5-bromo-4-chloro-3-indoyl-beta-D-galactosde (X-gal), o-nitrophenyl-beta-D-fucopyranoside (ONPF) and p-nitrophenyl-beta-D-fucopyranoside (PNPF) with greatest activity towards ONPG and PNPG and low levels of activity with ONPF and PNPF. Detectable, but very low levels of activity towards p-nitrophenyl-beta-lactose (PNPL), p-nitrophenyl-beta-cellobiose (PNPC), p-nitrophenyl-alpha-galactopyranoside (PNP-alpha-G), and p-nitrophenyl-beta-xylopyranoside (PNPX). This is Beta-galactosidase BgaA from Planococcus sp. (strain 'SOS Orange').